The chain runs to 217 residues: Small ribosomal subunit protein uS3 (217 aa).

The 71-residue stretch at 40-110 (IRDLINKGFN…EVYINIHEVR (71 aa)) folds into the KH type-2 domain.

This sequence belongs to the universal ribosomal protein uS3 family. As to quaternary structure, part of the 30S ribosomal subunit. Forms a tight complex with proteins S10 and S14.

Binds the lower part of the 30S subunit head. Binds mRNA in the 70S ribosome, positioning it for translation. The chain is Small ribosomal subunit protein uS3 from Rickettsia africae (strain ESF-5).